A 205-amino-acid chain; its full sequence is CASP-like protein 2A1 (205 aa).

A disordered region spans residues 1–25 (MDKSKVSTAVGGETPVGLITGSRDD). Over 1-34 (MDKSKVSTAVGGETPVGLITGSRDDELESGSMRT) the chain is Cytoplasmic. A helical transmembrane segment spans residues 35-55 (AETVLRLVPMAFCISALVLML). The Extracellular segment spans residues 56 to 76 (KNSQTNDFGTLSYSDLGAFRY). A helical membrane pass occupies residues 77 to 97 (LVHANGICAGYSLLSAIIVAM). Over 98–105 (PRPSTMSR) the chain is Cytoplasmic. Residues 106-126 (AWTFFFLDQVLTYVILAAAAV) traverse the membrane as a helical segment. Over 127-156 (SVEALYLARKGDIAITWSAACVSFGGFCHK) the chain is Extracellular. Residues 157-177 (AITSAVITFIVVVCYALLSLV) traverse the membrane as a helical segment. Over 178–205 (SSYKLFSRYGAPDVSYPGKGIEVAAFHS) the chain is Cytoplasmic.

Belongs to the Casparian strip membrane proteins (CASP) family. Homodimer and heterodimers.

The protein localises to the cell membrane. This Ricinus communis (Castor bean) protein is CASP-like protein 2A1.